Consider the following 395-residue polypeptide: F-box protein At5g46170 (395 aa).

Positions 24–72 (IDHFDHLPDSILLLVFNKIGDVKALGRCCVVSRRFHSLVPQVDNVVVRV) constitute an F-box domain. A disordered region spans residues 122-158 (TKRSSSSCGGSGSSSSSLSISGDDDGGEIEQGGVTHH). Residues 125-142 (SSSSCGGSGSSSSSLSIS) show a composition bias toward low complexity.

The sequence is that of F-box protein At5g46170 from Arabidopsis thaliana (Mouse-ear cress).